Consider the following 394-residue polypeptide: MIRKERAILALEDGTVYRGYAFGYRGETVGEVVFNTSMTGYQEIMTDPSYNGQIVTITYPHVGNYGVAIYDMESNKPYVRGFISREFSGEYSNYRAQQSLEAFMQQYGVVSIQGIDTRALVRRLRSGGVVKGVIAHRSFTHPEDPYGEFTPAEEQIYVQRARDHQDIDGFDMTKEVTTALPYAFPTLRQGKRVVLMDFGIKHTIIERLAEVGIEPIVVPAHTTPAQIMALQPHGLFLSNGPGDPAPLEYAHKTAWEMMGLLPTFGICLGHQILGLAAGGQTFKMKFGHRGGNQPVKNLLTGNVEITSQNHGYAVDLDSIPNGAFVATHVNLNDGTLEGMAHSRYPVFSVQYHPEASPGPHDSRYLFDRFIEEIDAFDGGNGTPIIKANPGRLGV.

Positions 1–188 (MIRKERAILA…ALPYAFPTLR (188 aa)) are CPSase. Residues Ser49, Gly240, and Gly242 each contribute to the L-glutamine site. In terms of domain architecture, Glutamine amidotransferase type-1 spans 192–379 (RVVLMDFGIK…IEEIDAFDGG (188 aa)). Cys267 functions as the Nucleophile in the catalytic mechanism. L-glutamine-binding residues include Leu268, Gln271, Asn309, Gly311, and Tyr312. Residues His352 and Glu354 contribute to the active site.

This sequence belongs to the CarA family. As to quaternary structure, composed of two chains; the small (or glutamine) chain promotes the hydrolysis of glutamine to ammonia, which is used by the large (or ammonia) chain to synthesize carbamoyl phosphate. Tetramer of heterodimers (alpha,beta)4.

The enzyme catalyses hydrogencarbonate + L-glutamine + 2 ATP + H2O = carbamoyl phosphate + L-glutamate + 2 ADP + phosphate + 2 H(+). It catalyses the reaction L-glutamine + H2O = L-glutamate + NH4(+). It functions in the pathway amino-acid biosynthesis; L-arginine biosynthesis; carbamoyl phosphate from bicarbonate: step 1/1. The protein operates within pyrimidine metabolism; UMP biosynthesis via de novo pathway; (S)-dihydroorotate from bicarbonate: step 1/3. Functionally, small subunit of the glutamine-dependent carbamoyl phosphate synthetase (CPSase). CPSase catalyzes the formation of carbamoyl phosphate from the ammonia moiety of glutamine, carbonate, and phosphate donated by ATP, constituting the first step of 2 biosynthetic pathways, one leading to arginine and/or urea and the other to pyrimidine nucleotides. The small subunit (glutamine amidotransferase) binds and cleaves glutamine to supply the large subunit with the substrate ammonia. In Deinococcus radiodurans (strain ATCC 13939 / DSM 20539 / JCM 16871 / CCUG 27074 / LMG 4051 / NBRC 15346 / NCIMB 9279 / VKM B-1422 / R1), this protein is Carbamoyl phosphate synthase small chain.